The sequence spans 395 residues: Elongation factor Tu (395 aa).

A tr-type G domain is found at 10–204; it reads KPHVNVGTIG…AVDNWVPLPE (195 aa). The G1 stretch occupies residues 19-26; it reads GHVDHGKT. 19–26 lines the GTP pocket; that stretch reads GHVDHGKT. T26 lines the Mg(2+) pocket. The tract at residues 60 to 64 is G2; sequence GITIN. A G3 region spans residues 81–84; that stretch reads DCPG. Residues 81-85 and 136-139 contribute to the GTP site; these read DCPGH and NKCD. The G4 stretch occupies residues 136–139; it reads NKCD. The segment at 174 to 176 is G5; it reads SAL.

The protein belongs to the TRAFAC class translation factor GTPase superfamily. Classic translation factor GTPase family. EF-Tu/EF-1A subfamily. As to quaternary structure, monomer.

Its subcellular location is the cytoplasm. The catalysed reaction is GTP + H2O = GDP + phosphate + H(+). GTP hydrolase that promotes the GTP-dependent binding of aminoacyl-tRNA to the A-site of ribosomes during protein biosynthesis. This chain is Elongation factor Tu, found in Porphyromonas gingivalis (strain ATCC 33277 / DSM 20709 / CIP 103683 / JCM 12257 / NCTC 11834 / 2561).